Here is a 478-residue protein sequence, read N- to C-terminus: Dynein regulatory complex subunit 4 (478 aa).

A compositionally biased stretch (basic residues) spans 1–12 (MAPKRRGKKGKA). The interval 1-32 (MAPKRRGKKGKAKGNAVVDGVAPEDMSKEQVE) is disordered. The tract at residues 1 to 114 (MAPKRRGKKG…LLYEHQNNLA (114 aa)) is regulates microtubule-binding. Coiled-coil stretches lie at residues 24–201 (EDMS…DELD) and 243–427 (NNLA…LARV). The microtubule-binding stretch occupies residues 115-258 (EVKTEGTVVM…NSLKEQMEDM (144 aa)). The interval 357 to 478 (QQKTGFKNLV…GPAGLVGAPT (122 aa)) is interaction with SMO.

The protein belongs to the DRC4 family. Component of the nexin-dynein regulatory complex (N-DRC). Interacts with microtubules. Interacts with SMO. Interacts (via coiled-coil domains) with RAB3B (in GTP-bound form). Interacts with DRC1. Interacts with DRC7.

The protein resides in the cytoplasm. It is found in the cytoskeleton. The protein localises to the cell projection. It localises to the cilium. Its subcellular location is the flagellum. The protein resides in the cilium axoneme. It is found in the cilium basal body. The protein localises to the golgi apparatus. It localises to the flagellum axoneme. Component of the nexin-dynein regulatory complex (N-DRC), a key regulator of ciliary/flagellar motility which maintains the alignment and integrity of the distal axoneme and regulates microtubule sliding in motile axonemes. Plays an important role in the assembly of the N-DRC linker. Plays dual roles at both the primary (or non-motile) cilia to regulate hedgehog signaling and in motile cilia to coordinate cilia movement. Required for proper motile cilia functioning. Positively regulates ciliary smoothened (SMO)-dependent Hedgehog (Hh) signaling pathway by facilitating the trafficking of SMO into the cilium and the stimulation of SMO activity in a GRK2-dependent manner. In Rattus norvegicus (Rat), this protein is Dynein regulatory complex subunit 4 (Gas8).